The chain runs to 60 residues: Cytochrome c oxidase assembly protein COX14 homolog (60 aa).

A helical membrane pass occupies residues Val10–Val32.

The protein localises to the mitochondrion membrane. Functionally, plays a role in the assembly or stability of the cytochrome c oxidase complex (COX). This is Cytochrome c oxidase assembly protein COX14 homolog from Danio rerio (Zebrafish).